The sequence spans 497 residues: Glutamyl-tRNA(Gln) amidotransferase subunit A (497 aa).

Active-site charge relay system residues include Lys75 and Ser150. Ser174 serves as the catalytic Acyl-ester intermediate.

The protein belongs to the amidase family. GatA subfamily. In terms of assembly, heterotrimer of A, B and C subunits.

The catalysed reaction is L-glutamyl-tRNA(Gln) + L-glutamine + ATP + H2O = L-glutaminyl-tRNA(Gln) + L-glutamate + ADP + phosphate + H(+). In terms of biological role, allows the formation of correctly charged Gln-tRNA(Gln) through the transamidation of misacylated Glu-tRNA(Gln) in organisms which lack glutaminyl-tRNA synthetase. The reaction takes place in the presence of glutamine and ATP through an activated gamma-phospho-Glu-tRNA(Gln). This chain is Glutamyl-tRNA(Gln) amidotransferase subunit A, found in Paraburkholderia phymatum (strain DSM 17167 / CIP 108236 / LMG 21445 / STM815) (Burkholderia phymatum).